The sequence spans 199 residues: Streptomycin biosynthesis protein StrG (199 aa).

The protein operates within antibiotic biosynthesis; streptomycin biosynthesis. May be involved in the formation of N-methyl-L-glucosamine. This Streptomyces griseus protein is Streptomycin biosynthesis protein StrG (strG).